Reading from the N-terminus, the 318-residue chain is Taste receptor type 2 member 60 (318 aa).

Topologically, residues 1–7 (MNGDHMV) are extracellular. Residues 8-28 (LGSSVTDQKAIILVIILLLLC) form a helical membrane-spanning segment. The Cytoplasmic portion of the chain corresponds to 29–40 (LVAIAGNGFITA). The chain crosses the membrane as a helical span at residues 41–61 (ALGVEWVLRGTLLPCDKLLVS). Residues 62–88 (LRASRFCLQWVVMGKTIYVLLYPTAFP) are Extracellular-facing. The chain crosses the membrane as a helical span at residues 89-109 (YNPVLQFLAFQWDFLNAATLW). The Cytoplasmic segment spans residues 110–128 (FSSWLSVFYCVKIATFTHP). The chain crosses the membrane as a helical span at residues 129-149 (VFLWLKHKLSEWVPWMFFSSV). The Extracellular segment spans residues 150 to 183 (GLSSFTTILFFIGNHSIYQNYLRNHLQPWNVTGN). N-linked (GlcNAc...) asparagine glycans are attached at residues Asn163 and Asn179. Residues 184-204 (SIWSYCEKFYLFPVKMITWTM) form a helical membrane-spanning segment. The Cytoplasmic segment spans residues 205–234 (PTAVFFICMILLITSLGRHMEKALLTTSGF). A helical transmembrane segment spans residues 235-255 (REPSVQAHVKALLALLSLAML). Residues 256–264 (FISYFLSLV) are Extracellular-facing. The helical transmembrane segment at 265–285 (LSAAGIFPPLDFKFWVGESVI) threads the bilayer. The Cytoplasmic portion of the chain corresponds to 286–318 (YLCAGVHPIILLFSNRRLRAVLERCRSSRCRTP).

The protein belongs to the G-protein coupled receptor T2R family.

The protein resides in the membrane. Its function is as follows. Receptor that may play a role in the perception of bitterness and is gustducin-linked. May play a role in sensing the chemical composition of the gastrointestinal content. The activity of this receptor may stimulate alpha gustducin, mediate PLC-beta-2 activation and lead to the gating of TRPM5. The sequence is that of Taste receptor type 2 member 60 (TAS2R60) from Macaca mulatta (Rhesus macaque).